Here is an 884-residue protein sequence, read N- to C-terminus: Alanine--tRNA ligase (884 aa).

4 residues coordinate Zn(2+): His565, His569, Cys674, and His678.

This sequence belongs to the class-II aminoacyl-tRNA synthetase family. Requires Zn(2+) as cofactor.

Its subcellular location is the cytoplasm. The enzyme catalyses tRNA(Ala) + L-alanine + ATP = L-alanyl-tRNA(Ala) + AMP + diphosphate. Catalyzes the attachment of alanine to tRNA(Ala) in a two-step reaction: alanine is first activated by ATP to form Ala-AMP and then transferred to the acceptor end of tRNA(Ala). Also edits incorrectly charged Ser-tRNA(Ala) and Gly-tRNA(Ala) via its editing domain. The protein is Alanine--tRNA ligase of Xanthobacter autotrophicus (strain ATCC BAA-1158 / Py2).